The chain runs to 249 residues: Exosome complex component Rrp41 (249 aa).

This sequence belongs to the RNase PH family. Rrp41 subfamily. Component of the archaeal exosome complex. Forms a hexameric ring-like arrangement composed of 3 Rrp41-Rrp42 heterodimers. The hexameric ring associates with a trimer of Rrp4 and/or Csl4 subunits.

It localises to the cytoplasm. Functionally, catalytic component of the exosome, which is a complex involved in RNA degradation. Has 3'-&gt;5' exoribonuclease activity. Can also synthesize heteromeric RNA-tails. The protein is Exosome complex component Rrp41 of Thermococcus onnurineus (strain NA1).